The chain runs to 132 residues: RING-H2 finger protein ATL39 (132 aa).

Residues 10–30 (TIVFAFASIGFIAFYIINYYI) traverse the membrane as a helical segment. The RING-type; atypical zinc-finger motif lies at 85 to 127 (CVVCLNEFKDDETLRLVPPCVHVFHADCVDIWLSHSSTCPICR).

This sequence belongs to the RING-type zinc finger family. ATL subfamily.

The protein resides in the membrane. It catalyses the reaction S-ubiquitinyl-[E2 ubiquitin-conjugating enzyme]-L-cysteine + [acceptor protein]-L-lysine = [E2 ubiquitin-conjugating enzyme]-L-cysteine + N(6)-ubiquitinyl-[acceptor protein]-L-lysine.. It participates in protein modification; protein ubiquitination. This Arabidopsis thaliana (Mouse-ear cress) protein is RING-H2 finger protein ATL39 (ATL39).